A 151-amino-acid polypeptide reads, in one-letter code: Mini-ribonuclease 3 (151 aa).

Residue aspartate 30 is part of the active site.

This sequence belongs to the MrnC RNase family. In terms of assembly, homodimer. Mg(2+) serves as cofactor.

The protein localises to the cytoplasm. Functionally, involved in correct processing of both the 5' and 3' ends of 23S rRNA precursor. Processes 30S rRNA precursor transcript even in absence of ribonuclease 3 (Rnc); Rnc processes 30S rRNA into smaller rRNA precursors. The polypeptide is Mini-ribonuclease 3 (Thermosynechococcus vestitus (strain NIES-2133 / IAM M-273 / BP-1)).